The chain runs to 142 residues: Complexin (142 aa).

Disordered regions lie at residues 13–70 (QLSA…MRQD) and 83–105 (IVEA…PEEL). Positions 29 to 138 (GDDKEKAEEE…NELKTQIEGK (110 aa)) form a coiled coil. Residues 31 to 70 (DKEKAEEEERERQEAIKEAEDRRKEKHRKMEEEREKMRQD) are compositionally biased toward basic and acidic residues. Position 139 is a cysteine methyl ester (C139). The S-farnesyl cysteine moiety is linked to residue C139. Positions 140 to 142 (VMQ) are cleaved as a propeptide — removed in mature form.

This sequence belongs to the complexin/synaphin family. In terms of assembly, binds to the SNARE core complex containing Snap25, synaptobrevin and Syx1A.

The protein resides in the membrane. Positively regulates a late step in synaptic vesicle exocytosis. In Drosophila melanogaster (Fruit fly), this protein is Complexin (cpx).